We begin with the raw amino-acid sequence, 239 residues long: Ribose-5-phosphate isomerase A (239 aa).

Residues 40 to 43 (SGST), 96 to 99 (DGAD), and 110 to 113 (KGGG) contribute to the substrate site. Glu-119 (proton acceptor) is an active-site residue. A substrate-binding site is contributed by Lys-137.

The protein belongs to the ribose 5-phosphate isomerase family. In terms of assembly, homodimer.

The catalysed reaction is aldehydo-D-ribose 5-phosphate = D-ribulose 5-phosphate. It functions in the pathway carbohydrate degradation; pentose phosphate pathway; D-ribose 5-phosphate from D-ribulose 5-phosphate (non-oxidative stage): step 1/1. In terms of biological role, catalyzes the reversible conversion of ribose-5-phosphate to ribulose 5-phosphate. The protein is Ribose-5-phosphate isomerase A of Methanococcus maripaludis (strain C7 / ATCC BAA-1331).